The sequence spans 124 residues: UPF0231 protein Sbal223_3655 (124 aa).

Belongs to the UPF0231 family.

In Shewanella baltica (strain OS223), this protein is UPF0231 protein Sbal223_3655.